Reading from the N-terminus, the 347-residue chain is GTPase Obg (347 aa).

Positions 1–159 (MHFIDQAEIE…VRLRLELKLI (159 aa)) constitute an Obg domain. In terms of domain architecture, OBG-type G spans 160-328 (AEVGIVGLPN…LLQRVWQCLG (169 aa)). GTP is bound by residues 166 to 173 (GLPNAGKS), 191 to 195 (FTTLQ), 213 to 216 (DIPG), 280 to 283 (NKID), and 309 to 311 (SAI). Mg(2+) is bound by residues Ser-173 and Thr-193.

This sequence belongs to the TRAFAC class OBG-HflX-like GTPase superfamily. OBG GTPase family. In terms of assembly, monomer. The cofactor is Mg(2+).

The protein localises to the cytoplasm. An essential GTPase which binds GTP, GDP and possibly (p)ppGpp with moderate affinity, with high nucleotide exchange rates and a fairly low GTP hydrolysis rate. Plays a role in control of the cell cycle, stress response, ribosome biogenesis and in those bacteria that undergo differentiation, in morphogenesis control. The chain is GTPase Obg from Synechococcus sp. (strain JA-2-3B'a(2-13)) (Cyanobacteria bacterium Yellowstone B-Prime).